The sequence spans 419 residues: Inward rectifier potassium channel 16 (419 aa).

Topologically, residues 1–67 are cytoplasmic; that stretch reads MSYYGSSYRI…MVDIFTTLVD (67 aa). Residues 68–94 traverse the membrane as a helical segment; that stretch reads TKWRHMFVVFSLSYILSWLIFGSIFWL. Residues 95-117 are Extracellular-facing; the sequence is IALHHGDLLSDPDITPCVDNVHS. The helical; Pore-forming intramembrane region spans 118-134; sequence FTAAFLFSLETQTTIGY. Positions 131-136 match the Selectivity filter motif; that stretch reads TIGYGY. At 135 to 143 the chain is on the extracellular side; the sequence is GYRCVTEEC. Residues 144-171 traverse the membrane as a helical segment; sequence SVAVLTVILQSILSCIINTFIIGAALAK. Residues 172 to 419 are Cytoplasmic-facing; it reads MATARKRAQT…LNRISMESQM (248 aa). A phosphoserine mark is found at Ser-358, Ser-374, and Ser-376.

Belongs to the inward rectifier-type potassium channel (TC 1.A.2.1) family. KCNJ16 subfamily. As to quaternary structure, it forms heteromeric channels with Kir4.1/KCNJ10; this interaction is required for KCNJ16 localization to the basolateral membrane in kidney cells. As a heteromer with KCNJ10, may interact with MAGI1; this interaction may facilitate KCNJ10/KCNJ16 potassium channel expression at the basolateral membrane in kidney cells. May form heteromers with Kir2.1/KCNJ2. Can form heteromeric channels with Kir4.2/KCNJ15. As to expression, expressed in the brain, testis, liver, spleen, kidney, submaxillary gland and adrenals. In the kidney, expressed in the epithelial cells of both proximal and distal convoluted tubules, in the endothelial cells surrounding glomerular capillaries and in the flattened parietal layer of Bowman's capsule.

The protein resides in the membrane. Its subcellular location is the basolateral cell membrane. It carries out the reaction K(+)(in) = K(+)(out). Its activity is regulated as follows. Channel activity is strongly regulated by variations of cytosolic pH; channels are activated by alkaline and inhibited by acidic pH values. Activated by phosphatidylinositol 4,5 biphosphate (PtdIns(4,5)P2). In terms of biological role, inward rectifier potassium channels are characterized by a greater tendency to allow potassium to flow into the cell rather than out of it. Their voltage dependence is regulated by the concentration of extracellular potassium; as external potassium is raised, the voltage range of the channel opening shifts to more positive voltages. The inward rectification is mainly due to the blockage of outward current by internal magnesium. KCNJ16 may be involved in the regulation of fluid and pH balance. In the kidney, together with KCNJ10, mediates basolateral K(+) recycling in distal tubules; this process is critical for Na(+) reabsorption at the tubules. The protein is Inward rectifier potassium channel 16 (Kcnj16) of Rattus norvegicus (Rat).